Here is a 233-residue protein sequence, read N- to C-terminus: Uridylate kinase (233 aa).

Residues 9-12 (KLSG), G51, and R55 contribute to the ATP site. UMP contacts are provided by residues D69 and 130 to 137 (TGNPFFST). ATP-binding residues include N158, Y164, and D167.

The protein belongs to the UMP kinase family. In terms of assembly, homohexamer.

It localises to the cytoplasm. It carries out the reaction UMP + ATP = UDP + ADP. It functions in the pathway pyrimidine metabolism; CTP biosynthesis via de novo pathway; UDP from UMP (UMPK route): step 1/1. Inhibited by UTP. Catalyzes the reversible phosphorylation of UMP to UDP. In Thermus thermophilus (strain ATCC BAA-163 / DSM 7039 / HB27), this protein is Uridylate kinase.